The chain runs to 255 residues: Triosephosphate isomerase (255 aa).

Substrate is bound at residue 9-11 (NWK). The active-site Electrophile is His-95. The Proton acceptor role is filled by Glu-167. Residues Gly-173, Ser-212, and 233–234 (GG) each bind substrate.

Belongs to the triosephosphate isomerase family. As to quaternary structure, homodimer.

The protein resides in the cytoplasm. It catalyses the reaction D-glyceraldehyde 3-phosphate = dihydroxyacetone phosphate. Its pathway is carbohydrate biosynthesis; gluconeogenesis. It functions in the pathway carbohydrate degradation; glycolysis; D-glyceraldehyde 3-phosphate from glycerone phosphate: step 1/1. In terms of biological role, involved in the gluconeogenesis. Catalyzes stereospecifically the conversion of dihydroxyacetone phosphate (DHAP) to D-glyceraldehyde-3-phosphate (G3P). This Photorhabdus laumondii subsp. laumondii (strain DSM 15139 / CIP 105565 / TT01) (Photorhabdus luminescens subsp. laumondii) protein is Triosephosphate isomerase.